The sequence spans 180 residues: ATP synthase subunit delta (180 aa).

The protein belongs to the ATPase delta chain family. F-type ATPases have 2 components, F(1) - the catalytic core - and F(0) - the membrane proton channel. F(1) has five subunits: alpha(3), beta(3), gamma(1), delta(1), epsilon(1). F(0) has three main subunits: a(1), b(2) and c(10-14). The alpha and beta chains form an alternating ring which encloses part of the gamma chain. F(1) is attached to F(0) by a central stalk formed by the gamma and epsilon chains, while a peripheral stalk is formed by the delta and b chains.

It is found in the cell inner membrane. In terms of biological role, f(1)F(0) ATP synthase produces ATP from ADP in the presence of a proton or sodium gradient. F-type ATPases consist of two structural domains, F(1) containing the extramembraneous catalytic core and F(0) containing the membrane proton channel, linked together by a central stalk and a peripheral stalk. During catalysis, ATP synthesis in the catalytic domain of F(1) is coupled via a rotary mechanism of the central stalk subunits to proton translocation. This protein is part of the stalk that links CF(0) to CF(1). It either transmits conformational changes from CF(0) to CF(1) or is implicated in proton conduction. The sequence is that of ATP synthase subunit delta from Geobacter sp. (strain M21).